We begin with the raw amino-acid sequence, 226 residues long: 7-cyano-7-deazaguanine synthase (226 aa).

8 to 18 (ISGGLDSTTCL) lines the ATP pocket. Cys-188, Cys-198, Cys-201, and Cys-204 together coordinate Zn(2+).

It belongs to the QueC family. The cofactor is Zn(2+).

The enzyme catalyses 7-carboxy-7-deazaguanine + NH4(+) + ATP = 7-cyano-7-deazaguanine + ADP + phosphate + H2O + H(+). It functions in the pathway purine metabolism; 7-cyano-7-deazaguanine biosynthesis. In terms of biological role, catalyzes the ATP-dependent conversion of 7-carboxy-7-deazaguanine (CDG) to 7-cyano-7-deazaguanine (preQ(0)). This Coxiella burnetii (strain RSA 493 / Nine Mile phase I) protein is 7-cyano-7-deazaguanine synthase.